The sequence spans 382 residues: Kelch domain-containing protein 3 (382 aa).

Kelch repeat units lie at residues 25–77, 88–138, 139–189, 191–249, and 251–301; these read RVYS…PYMR, TVLL…VLGK, IMYI…TMLG, HMYV…GYNG, and LYIF…IVGD.

Component of a CRL2(KLHDC3) complex, also named ECS(KLHDC3) complex, composed of CUL2, Elongin BC (ELOB and ELOC), RBX1 and substrate-specific adapter KLHDC3. May form oligomers as a KLHDC3-ELOB-ELOC complex; this interaction is likely autoinhibitory for the E3 ligase complex.

It is found in the cytoplasm. Its pathway is protein modification; protein ubiquitination. Substrate-recognition component of a Cul2-RING (CRL2) E3 ubiquitin-protein ligase complex of the DesCEND (destruction via C-end degrons) pathway, which recognizes a C-degron located at the extreme C terminus of target proteins, leading to their ubiquitination and degradation. The C-degron recognized by the DesCEND pathway is usually a motif of less than ten residues and can be present in full-length proteins, truncated proteins or proteolytically cleaved forms. The CRL2(KLHDC3) complex specifically recognizes proteins with a glycine (Gly) at the C-terminus, leading to their ubiquitination and degradation: recognizes the C-terminal -Arg-(Xaa)n-Arg-Gly, -Arg-(Xaa)n-Lys-Gly, and -Arg-(Xaa)n-Gln-Gly degrons. The CRL2(KLHDC3) complex mediates ubiquitination and degradation of truncated SELENOV and SEPHS2 selenoproteins produced by failed UGA/Sec decoding, which end with a glycine. May be involved in meiotic recombination process. The chain is Kelch domain-containing protein 3 from Homo sapiens (Human).